Consider the following 1589-residue polypeptide: Pentafunctional AROM polypeptide (1589 aa).

The segment at 1-392 (MVKFEKVPIL…YGKSAHYVND (392 aa)) is 3-dehydroquinate synthase. NAD(+)-binding positions include 43–45 (DTN), 78–81 (EANK), 109–111 (GGI), and Asp-114. A 7-phospho-2-dehydro-3-deoxy-D-arabino-heptonate-binding site is contributed by Arg-125. Residue 134–135 (TS) coordinates NAD(+). Residues Asp-141 and Lys-147 each contribute to the 7-phospho-2-dehydro-3-deoxy-D-arabino-heptonate site. Lys-156 lines the NAD(+) pocket. Asn-157 lines the 7-phospho-2-dehydro-3-deoxy-D-arabino-heptonate pocket. NAD(+)-binding positions include 174–177 (WLET) and Asn-185. Zn(2+) is bound at residue Glu-189. Residues 189 to 192 (EVIK) and Lys-258 contribute to the 7-phospho-2-dehydro-3-deoxy-D-arabino-heptonate site. Catalysis depends on Glu-268, which acts as the Proton acceptor; for 3-dehydroquinate synthase activity. 7-phospho-2-dehydro-3-deoxy-D-arabino-heptonate-binding positions include 272–276 (RNLLN) and His-279. His-279 contacts Zn(2+). His-283 acts as the Proton acceptor; for 3-dehydroquinate synthase activity in catalysis. 7-phospho-2-dehydro-3-deoxy-D-arabino-heptonate contacts are provided by His-295 and Lys-364. His-295 is a Zn(2+) binding site. An EPSP synthase region spans residues 405–872 (VYPFSNIPQE…WDVLHTELGA (468 aa)). Cys-854 functions as the For EPSP synthase activity in the catalytic mechanism. Residues 891 to 1081 (SVVLIGMRAA…VPNKRSAFVC (191 aa)) form a shikimate kinase region. ATP is bound at residue 896-903 (GMRAAGKS). Residues 1082-1294 (LTFGDLTEKA…SAPGQLTLAQ (213 aa)) are 3-dehydroquinase. His-1199 functions as the Proton acceptor; for 3-dehydroquinate dehydratase activity in the catalytic mechanism. The active-site Schiff-base intermediate with substrate; for 3-dehydroquinate dehydratase activity is Lys-1228. Positions 1307–1589 (SKKFFVVGNP…QEIFNAVTRD (283 aa)) are shikimate dehydrogenase.

This sequence in the N-terminal section; belongs to the sugar phosphate cyclases superfamily. Dehydroquinate synthase family. It in the 2nd section; belongs to the EPSP synthase family. In the 3rd section; belongs to the shikimate kinase family. The protein in the 4th section; belongs to the type-I 3-dehydroquinase family. This sequence in the C-terminal section; belongs to the shikimate dehydrogenase family. In terms of assembly, homodimer. The cofactor is Zn(2+).

It is found in the cytoplasm. The catalysed reaction is 7-phospho-2-dehydro-3-deoxy-D-arabino-heptonate = 3-dehydroquinate + phosphate. It carries out the reaction 3-dehydroquinate = 3-dehydroshikimate + H2O. The enzyme catalyses shikimate + NADP(+) = 3-dehydroshikimate + NADPH + H(+). It catalyses the reaction shikimate + ATP = 3-phosphoshikimate + ADP + H(+). The catalysed reaction is 3-phosphoshikimate + phosphoenolpyruvate = 5-O-(1-carboxyvinyl)-3-phosphoshikimate + phosphate. Its pathway is metabolic intermediate biosynthesis; chorismate biosynthesis; chorismate from D-erythrose 4-phosphate and phosphoenolpyruvate: step 2/7. The protein operates within metabolic intermediate biosynthesis; chorismate biosynthesis; chorismate from D-erythrose 4-phosphate and phosphoenolpyruvate: step 3/7. It functions in the pathway metabolic intermediate biosynthesis; chorismate biosynthesis; chorismate from D-erythrose 4-phosphate and phosphoenolpyruvate: step 4/7. It participates in metabolic intermediate biosynthesis; chorismate biosynthesis; chorismate from D-erythrose 4-phosphate and phosphoenolpyruvate: step 5/7. Its pathway is metabolic intermediate biosynthesis; chorismate biosynthesis; chorismate from D-erythrose 4-phosphate and phosphoenolpyruvate: step 6/7. The AROM polypeptide catalyzes 5 consecutive enzymatic reactions in prechorismate polyaromatic amino acid biosynthesis. This Zygosaccharomyces rouxii (strain ATCC 2623 / CBS 732 / NBRC 1130 / NCYC 568 / NRRL Y-229) protein is Pentafunctional AROM polypeptide.